Here is a 791-residue protein sequence, read N- to C-terminus: Outer membrane protein assembly factor BamA (791 aa).

POTRA domains are found at residues Asn-59–Lys-130, Pro-131–Gly-209, Leu-212–Gly-298, Tyr-301–Arg-383, and Val-386–Gln-459.

This sequence belongs to the BamA family. In terms of assembly, part of the Bam complex.

Its subcellular location is the cell outer membrane. Its function is as follows. Part of the outer membrane protein assembly complex, which is involved in assembly and insertion of beta-barrel proteins into the outer membrane. This Nitratidesulfovibrio vulgaris (strain ATCC 29579 / DSM 644 / CCUG 34227 / NCIMB 8303 / VKM B-1760 / Hildenborough) (Desulfovibrio vulgaris) protein is Outer membrane protein assembly factor BamA.